The primary structure comprises 493 residues: Transmembrane and coiled-coil domain-containing protein 6 (493 aa).

Residues 15–84 (GVEELRRRRR…QRGTEEKERE (70 aa)) are a coiled coil. 2 consecutive transmembrane segments (helical) span residues 338–358 (VVAA…SLLP) and 386–406 (PLLQ…TVLC).

The protein localises to the membrane. The polypeptide is Transmembrane and coiled-coil domain-containing protein 6 (TMCO6) (Homo sapiens (Human)).